A 764-amino-acid chain; its full sequence is Zygote defective protein 12 (764 aa).

Residues 1–20 are compositionally biased toward polar residues; it reads MLDLTNQESDSSENGNSKYA. The disordered stretch occupies residues 1–33; the sequence is MLDLTNQESDSSENGNSKYADSTDGRGIGTSRR. The interaction with dli-1 stretch occupies residues 1–236; the sequence is MLDLTNQESD…ESSVITNGNG (236 aa). A Calponin-homology (CH) domain is found at 43–169; the sequence is RKDLADLVFW…VSLAFIGKTQ (127 aa). Coiled coils occupy residues 244–405 and 436–692; these read LSAN…HVKT and GLES…NRLI. A helical membrane pass occupies residues 732–752; that stretch reads ALPWRFGISSMLIIFMVWFFI.

Belongs to the hook family. As to quaternary structure, homodimer. Interacts with the dynein subunit dli-1 via its N-terminus. May interact with microtubules.

It is found in the nucleus membrane. Its subcellular location is the cytoplasm. The protein localises to the cytoskeleton. The protein resides in the microtubule organizing center. It localises to the centrosome. Its function is as follows. Cytoskeletal linker protein, which is essential for attachment of the centrosome to the nucleus. Required for dynein localization to the nuclear envelope. The chain is Zygote defective protein 12 (zyg-12) from Caenorhabditis briggsae.